Here is a 329-residue protein sequence, read N- to C-terminus: UDP-glucose 4-epimerase (329 aa).

NAD(+)-binding positions include 13 to 14 (YV), 33 to 38 (HNLSTG), 53 to 54 (DI), 76 to 80 (FAAFS), Asn-95, Thr-120, Tyr-144, Lys-148, and Phe-172. Substrate contacts are provided by Thr-120 and Tyr-144. Tyr-144 (proton acceptor) is an active-site residue. Residues Asn-173, 190 to 191 (HL), 207 to 209 (SVY), Arg-221, and 281 to 284 (RGRD) contribute to the substrate site.

The protein belongs to the NAD(P)-dependent epimerase/dehydratase family. In terms of assembly, homodimer. It depends on NAD(+) as a cofactor.

The enzyme catalyses UDP-alpha-D-glucose = UDP-alpha-D-galactose. Its pathway is carbohydrate metabolism; galactose metabolism. In terms of biological role, involved in the metabolism of galactose. Catalyzes the conversion of UDP-galactose (UDP-Gal) to UDP-glucose (UDP-Glc) through a mechanism involving the transient reduction of NAD. The protein is UDP-glucose 4-epimerase (galE) of Streptomyces lividans.